Here is a 519-residue protein sequence, read N- to C-terminus: Threonine synthase, chloroplastic (519 aa).

The transit peptide at 1-40 (MAASCMLRSSFISPGLPQLHHQSTSKPNNGIHFFTPIKAT) directs the protein to the chloroplast. Lysine 196 is modified (N6-(pyridoxal phosphate)lysine). Residues 328-332 (GNLGN) and threonine 465 each bind pyridoxal 5'-phosphate.

This sequence belongs to the threonine synthase family. As to quaternary structure, homodimer. The cofactor is pyridoxal 5'-phosphate.

The protein localises to the plastid. The protein resides in the chloroplast. It carries out the reaction O-phospho-L-homoserine + H2O = L-threonine + phosphate. It functions in the pathway amino-acid biosynthesis; L-threonine biosynthesis; L-threonine from L-aspartate: step 5/5. Allosterically activated by S-adenosyl-methionine (SAM). Functionally, catalyzes the gamma-elimination of phosphate from L-phosphohomoserine and the beta-addition of water to produce L-threonine. In Solanum tuberosum (Potato), this protein is Threonine synthase, chloroplastic.